A 204-amino-acid polypeptide reads, in one-letter code: Nucleoside triphosphate pyrophosphatase (204 aa).

Aspartate 79 (proton acceptor) is an active-site residue.

The protein belongs to the Maf family. A divalent metal cation is required as a cofactor.

Its subcellular location is the cytoplasm. The catalysed reaction is a ribonucleoside 5'-triphosphate + H2O = a ribonucleoside 5'-phosphate + diphosphate + H(+). It catalyses the reaction a 2'-deoxyribonucleoside 5'-triphosphate + H2O = a 2'-deoxyribonucleoside 5'-phosphate + diphosphate + H(+). Functionally, nucleoside triphosphate pyrophosphatase. May have a dual role in cell division arrest and in preventing the incorporation of modified nucleotides into cellular nucleic acids. This Trichodesmium erythraeum (strain IMS101) protein is Nucleoside triphosphate pyrophosphatase.